The primary structure comprises 403 residues: UPF0229 protein CKR_0568 (403 aa).

Positions 71-109 (SSGVGSGDGSQKKGDRIGKAIKDRDGKGNQGAGNQEGED) are disordered. Residues 80–97 (SQKKGDRIGKAIKDRDGK) show a composition bias toward basic and acidic residues.

This sequence belongs to the UPF0229 family.

The protein is UPF0229 protein CKR_0568 of Clostridium kluyveri (strain NBRC 12016).